Consider the following 100-residue polypeptide: Urease subunit gamma (100 aa).

It belongs to the urease gamma subunit family. In terms of assembly, heterotrimer of UreA (gamma), UreB (beta) and UreC (alpha) subunits. Three heterotrimers associate to form the active enzyme.

The protein localises to the cytoplasm. The catalysed reaction is urea + 2 H2O + H(+) = hydrogencarbonate + 2 NH4(+). It participates in nitrogen metabolism; urea degradation; CO(2) and NH(3) from urea (urease route): step 1/1. In Stutzerimonas stutzeri (strain A1501) (Pseudomonas stutzeri), this protein is Urease subunit gamma.